The following is a 316-amino-acid chain: 4-diphosphocytidyl-2-C-methyl-D-erythritol kinase (316 aa).

Residue Lys-32 is part of the active site. 126–136 (PVGAGLGGGSA) serves as a coordination point for ATP. Asp-168 is a catalytic residue.

This sequence belongs to the GHMP kinase family. IspE subfamily.

The catalysed reaction is 4-CDP-2-C-methyl-D-erythritol + ATP = 4-CDP-2-C-methyl-D-erythritol 2-phosphate + ADP + H(+). It functions in the pathway isoprenoid biosynthesis; isopentenyl diphosphate biosynthesis via DXP pathway; isopentenyl diphosphate from 1-deoxy-D-xylulose 5-phosphate: step 3/6. Functionally, catalyzes the phosphorylation of the position 2 hydroxy group of 4-diphosphocytidyl-2C-methyl-D-erythritol. The sequence is that of 4-diphosphocytidyl-2-C-methyl-D-erythritol kinase from Bifidobacterium longum subsp. infantis (strain ATCC 15697 / DSM 20088 / JCM 1222 / NCTC 11817 / S12).